A 170-amino-acid chain; its full sequence is Flavin reductase (170 aa).

NAD(+)-binding positions include Ser-51, His-138, and 159–162 (FYRG).

The protein belongs to the non-flavoprotein flavin reductase family. Homodimer. Likely forms a loose transient complex with monooxygenases for which it provides FMNH(2).

The enzyme catalyses FMNH2 + NAD(+) = FMN + NADH + 2 H(+). It catalyses the reaction FADH2 + NAD(+) = FAD + NADH + 2 H(+). In terms of biological role, catalyzes the reduction of FMN, and to a lesser extent, FAD, using NADH as an electron donor. Is able to provide the FMNH(2) required for the Baeyer-Villiger oxidations catalyzed by 2,5-diketocamphane monooxygenases and 3,6-diketocamphane monooxygenase. NADPH acts as a very poor cosubstrate. The protein is Flavin reductase of Pseudomonas putida (Arthrobacter siderocapsulatus).